We begin with the raw amino-acid sequence, 359 residues long: Adenosine 3'-phospho 5'-phosphosulfate transporter 1 (359 aa).

7 helical membrane-spanning segments follow: residues N26–L46, S68–L88, Y157–S177, T184–F204, S228–I248, V254–I276, and T300–G320. The disordered stretch occupies residues K332–K359. Residues G340–K359 are compositionally biased toward low complexity.

It belongs to the nucleotide-sugar transporter family. SLC35B subfamily.

The protein localises to the golgi apparatus membrane. The catalysed reaction is 3'-phosphoadenylyl sulfate(in) + adenosine 3',5'-bisphosphate(out) = 3'-phosphoadenylyl sulfate(out) + adenosine 3',5'-bisphosphate(in). Its function is as follows. Probably functions as a 3'-phosphoadenylyl sulfate:adenosine 3',5'-bisphosphate antiporter at the Golgi membranes. Mediates the transport from the cytosol into the lumen of the Golgi of 3'-phosphoadenylyl sulfate/adenosine 3'-phospho 5'-phosphosulfate (PAPS), a universal sulfuryl donor for sulfation events that take place in that compartment. The sequence is that of Adenosine 3'-phospho 5'-phosphosulfate transporter 1 (slc35b2) from Dictyostelium discoideum (Social amoeba).